Here is a 26-residue protein sequence, read N- to C-terminus: Nicotinic acetylcholine receptor-binding protein Mnn-1A (26 aa).

Cys-3 and Cys-22 are joined by a disulfide.

Belongs to the three-finger toxin family. Short-chain subfamily. Expressed by the venom gland.

The protein localises to the secreted. Its function is as follows. Binds and may inhibit nicotinic acetylcholine receptors (nAChR). The polypeptide is Nicotinic acetylcholine receptor-binding protein Mnn-1A (Micrurus nigrocinctus (Central American coral snake)).